A 521-amino-acid polypeptide reads, in one-letter code: Acidic amino acid decarboxylase GADL1 (521 aa).

Residues 1-12 (MSLLPDRERAPD) show a composition bias toward basic and acidic residues. The segment at 1–20 (MSLLPDRERAPDGDISPQEM) is disordered. Residue Lys333 is modified to N6-(pyridoxal phosphate)lysine.

Belongs to the group II decarboxylase family. Homodimer. Pyridoxal 5'-phosphate serves as cofactor. As to expression, expressed at highest levels in skeletal muscles. Also detected heart, spleen and rumen.

It catalyses the reaction L-aspartate + H(+) = beta-alanine + CO2. The catalysed reaction is 3-sulfino-L-alanine + H(+) = hypotaurine + CO2. It carries out the reaction L-cysteate + H(+) = taurine + CO2. Catalyzes the decarboxylation of L-aspartate, 3-sulfino-L-alanine (cysteine sulfinic acid), and L-cysteate to beta-alanine, hypotaurine and taurine, respectively. The preferred substrate is L-aspartate. Does not exhibit any decarboxylation activity toward glutamate. The protein is Acidic amino acid decarboxylase GADL1 (GADL1) of Bos taurus (Bovine).